A 139-amino-acid polypeptide reads, in one-letter code: Mannose-specific lectin (139 aa).

In terms of domain architecture, Bulb-type lectin spans D1–H109. Q26, D28, N30, Y34, D37, K38, W41, A42, N44, Q57, D59, N61, Y65, I72, W73, N76, N83, Q89, D91, N93, Y97, and W102 together coordinate alpha-D-mannopyranose. C29 and C52 are disulfide-bonded.

As to quaternary structure, homotetramer; antiparallel. As to expression, detected in bulbs (at protein level).

Its subcellular location is the secreted. Mannose-specific lectin. Displays antiviral activity and therefore may contribute to defense against infections. Shows agglutinating activity towards rabbit erythrocytes. The polypeptide is Mannose-specific lectin (Narcissus tazetta (Cream narcissus)).